The chain runs to 352 residues: Ion-translocating oxidoreductase complex subunit D (352 aa).

Helical transmembrane passes span 20–40 (IMLL…WFFG), 42–62 (GTLV…ALVL), 89–109 (IPPL…VIIA), and 123–143 (PAMI…TSWL). Position 187 is an FMN phosphoryl threonine (T187). 5 consecutive transmembrane segments (helical) span residues 214-234 (ILAG…GVWL), 242-262 (WHIP…GWLF), 267-287 (LASP…FFIL), 301-321 (LIFG…GGYP), and 322-342 (DGVA…DYYT).

The protein belongs to the NqrB/RnfD family. In terms of assembly, the complex is composed of six subunits: RsxA, RsxB, RsxC, RsxD, RsxE and RsxG. FMN is required as a cofactor.

The protein resides in the cell inner membrane. Its function is as follows. Part of a membrane-bound complex that couples electron transfer with translocation of ions across the membrane. Required to maintain the reduced state of SoxR. This Escherichia coli O17:K52:H18 (strain UMN026 / ExPEC) protein is Ion-translocating oxidoreductase complex subunit D.